The following is a 442-amino-acid chain: tRNA modification GTPase MnmE (442 aa).

Arg-24, Glu-82, and Lys-120 together coordinate (6S)-5-formyl-5,6,7,8-tetrahydrofolate. The 151-residue stretch at 217–367 (GLHIVITGEP…LISLIKKKAE (151 aa)) folds into the TrmE-type G domain. Residues 227–232 (NVGKST), 246–252 (SEYAGTT), and 271–274 (DTAG) each bind GTP. Ser-231 contacts Mg(2+). Ser-246 lines the K(+) pocket. Thr-252 contacts Mg(2+). Lys-442 contacts (6S)-5-formyl-5,6,7,8-tetrahydrofolate.

The protein belongs to the TRAFAC class TrmE-Era-EngA-EngB-Septin-like GTPase superfamily. TrmE GTPase family. Homodimer. Heterotetramer of two MnmE and two MnmG subunits. It depends on K(+) as a cofactor.

The protein localises to the cytoplasm. In terms of biological role, exhibits a very high intrinsic GTPase hydrolysis rate. Involved in the addition of a carboxymethylaminomethyl (cmnm) group at the wobble position (U34) of certain tRNAs, forming tRNA-cmnm(5)s(2)U34. The protein is tRNA modification GTPase MnmE of Wolbachia pipientis subsp. Culex pipiens (strain wPip).